A 473-amino-acid chain; its full sequence is Cardiolipin synthase C (473 aa).

PLD phosphodiesterase domains are found at residues 125-152 and 364-391; these read LNRR…GDAY and SGAS…DPRS. Active-site residues include His130, Lys132, Asp137, His369, Lys371, and Asp376.

It belongs to the phospholipase D family. Cardiolipin synthase subfamily. ClsC sub-subfamily.

It carries out the reaction a 1,2-diacyl-sn-glycero-3-phospho-(1'-sn-glycerol) + a 1,2-diacyl-sn-glycero-3-phosphoethanolamine = a cardiolipin + ethanolamine. Its activity is regulated as follows. Full activity requires coexpression with the neighboring gene ymdB. Its function is as follows. Catalyzes the synthesis of cardiolipin (CL) (diphosphatidylglycerol) from phosphatidylglycerol (PG) and phosphatidylethanolamine (PE). This chain is Cardiolipin synthase C, found in Escherichia coli (strain K12).